The chain runs to 455 residues: 1,4-beta-D-glucan cellobiohydrolase C (455 aa).

Residues 1-19 (MHYSASGLALAFLLPAIQA) form the signal peptide. The 36-residue stretch at 20–55 (QQTLYGQCGGSGWTGATSCVAGAACSTLNQWYAQCL) folds into the CBM1 domain. Cystine bridges form between cysteine 27/cysteine 44 and cysteine 38/cysteine 54. Positions 59-92 (TTTSTTLTTTTSSVTTTSNPGSTTTTSSVTVTAT) are thr-rich linker. Residues 66–86 (TTTTSSVTTTSNPGSTTTTSS) form a disordered region. The catalytic stretch occupies residues 93 to 450 (ASGNPFSGYQ…QAYFVQLLQN (358 aa)). Aspartate 185 is an active-site residue. Intrachain disulfides connect cysteine 186–cysteine 245 and cysteine 377–cysteine 424. Aspartate 231 functions as the Proton donor in the catalytic mechanism. The active-site Nucleophile is aspartate 410.

It belongs to the glycosyl hydrolase 6 (cellulase B) family.

It localises to the secreted. It catalyses the reaction Hydrolysis of (1-&gt;4)-beta-D-glucosidic linkages in cellulose and cellotetraose, releasing cellobiose from the non-reducing ends of the chains.. The biological conversion of cellulose to glucose generally requires three types of hydrolytic enzymes: (1) Endoglucanases which cut internal beta-1,4-glucosidic bonds; (2) Exocellobiohydrolases that cut the disaccharide cellobiose from the non-reducing end of the cellulose polymer chain; (3) Beta-1,4-glucosidases which hydrolyze the cellobiose and other short cello-oligosaccharides to glucose. Active against carboxymethylcellulose, beta-glucan and lichenan. The sequence is that of 1,4-beta-D-glucan cellobiohydrolase C (cbhC) from Emericella nidulans (strain FGSC A4 / ATCC 38163 / CBS 112.46 / NRRL 194 / M139) (Aspergillus nidulans).